A 71-amino-acid chain; its full sequence is R-phycoerythrin gamma-1 chain, chloroplastic (71 aa).

Cys-25 and Cys-34 together coordinate phycourobilin. Cys-49 is a binding site for (2R,3E)-phycoerythrobilin. Cys-58 contacts phycourobilin.

As to quaternary structure, heteromer of 6 alpha, 6 beta and 1 gamma chains. Contains four covalently linked bilin chromophores.

The protein localises to the plastid. It localises to the chloroplast thylakoid membrane. Its function is as follows. Critical for the incorporation of phycoerythrin in the phycobilisome complex. This is R-phycoerythrin gamma-1 chain, chloroplastic from Gastroclonium coulteri (Red alga).